A 321-amino-acid polypeptide reads, in one-letter code: Malate dehydrogenase (321 aa).

NAD(+) is bound by residues 11 to 16 (GSGNIG) and D35. Substrate-binding residues include R84 and R90. NAD(+) contacts are provided by residues N97 and 120-122 (ITN). Substrate is bound by residues N122 and R153. H177 serves as the catalytic Proton acceptor.

This sequence belongs to the LDH/MDH superfamily. MDH type 3 family.

It carries out the reaction (S)-malate + NAD(+) = oxaloacetate + NADH + H(+). Functionally, catalyzes the reversible oxidation of malate to oxaloacetate. This chain is Malate dehydrogenase, found in Rickettsia peacockii (strain Rustic).